A 439-amino-acid polypeptide reads, in one-letter code: 23S rRNA (uracil(1939)-C(5))-methyltransferase RlmD (439 aa).

One can recognise a TRAM domain in the interval 10–68 (QKKLRAAFTTIVQDLDYQGLGVAKIQGKTWFIENALPQEQVQVQVIEEKRQYGLGRVQK). Positions 81, 87, 90, and 168 each coordinate [4Fe-4S] cluster. S-adenosyl-L-methionine contacts are provided by glutamine 271, phenylalanine 300, asparagine 305, glutamate 321, aspartate 348, and aspartate 369. Cysteine 395 serves as the catalytic Nucleophile.

This sequence belongs to the class I-like SAM-binding methyltransferase superfamily. RNA M5U methyltransferase family. RlmD subfamily.

The enzyme catalyses uridine(1939) in 23S rRNA + S-adenosyl-L-methionine = 5-methyluridine(1939) in 23S rRNA + S-adenosyl-L-homocysteine + H(+). Its function is as follows. Catalyzes the formation of 5-methyl-uridine at position 1939 (m5U1939) in 23S rRNA. The protein is 23S rRNA (uracil(1939)-C(5))-methyltransferase RlmD of Histophilus somni (strain 129Pt) (Haemophilus somnus).